Here is a 187-residue protein sequence, read N- to C-terminus: UPF0301 protein VV2869 (187 aa).

This sequence belongs to the UPF0301 (AlgH) family.

This chain is UPF0301 protein VV2869, found in Vibrio vulnificus (strain YJ016).